The primary structure comprises 498 residues: Glycerol kinase (498 aa).

Thr12 contacts ADP. The ATP site is built by Thr12, Thr13, and Ser14. Position 12 (Thr12) interacts with sn-glycerol 3-phosphate. Position 16 (Arg16) interacts with ADP. Sn-glycerol 3-phosphate-binding residues include Arg82, Glu83, Tyr134, and Asp243. Positions 82, 83, 134, 243, and 244 each coordinate glycerol. Positions 265 and 308 each coordinate ADP. Residues Thr265, Gly308, Gln312, and Gly412 each coordinate ATP. Residue Gly412 participates in ADP binding.

This sequence belongs to the FGGY kinase family.

It carries out the reaction glycerol + ATP = sn-glycerol 3-phosphate + ADP + H(+). Its pathway is polyol metabolism; glycerol degradation via glycerol kinase pathway; sn-glycerol 3-phosphate from glycerol: step 1/1. With respect to regulation, inhibited by fructose 1,6-bisphosphate (FBP). Key enzyme in the regulation of glycerol uptake and metabolism. Catalyzes the phosphorylation of glycerol to yield sn-glycerol 3-phosphate. The chain is Glycerol kinase from Rhizobium rhizogenes (strain K84 / ATCC BAA-868) (Agrobacterium radiobacter).